A 425-amino-acid chain; its full sequence is Enolase (425 aa).

Gln-164 is a (2R)-2-phosphoglycerate binding site. Glu-208 serves as the catalytic Proton donor. Positions 243, 286, and 312 each coordinate Mg(2+). Lys-337, Arg-366, Ser-367, and Lys-388 together coordinate (2R)-2-phosphoglycerate. Catalysis depends on Lys-337, which acts as the Proton acceptor.

Belongs to the enolase family. Requires Mg(2+) as cofactor.

It is found in the cytoplasm. It localises to the secreted. The protein localises to the cell surface. The catalysed reaction is (2R)-2-phosphoglycerate = phosphoenolpyruvate + H2O. The protein operates within carbohydrate degradation; glycolysis; pyruvate from D-glyceraldehyde 3-phosphate: step 4/5. Its function is as follows. Catalyzes the reversible conversion of 2-phosphoglycerate (2-PG) into phosphoenolpyruvate (PEP). It is essential for the degradation of carbohydrates via glycolysis. This Methanococcus aeolicus (strain ATCC BAA-1280 / DSM 17508 / OCM 812 / Nankai-3) protein is Enolase.